The primary structure comprises 203 residues: N-(5'-phosphoribosyl)anthranilate isomerase (203 aa).

The protein belongs to the TrpF family.

The enzyme catalyses N-(5-phospho-beta-D-ribosyl)anthranilate = 1-(2-carboxyphenylamino)-1-deoxy-D-ribulose 5-phosphate. It participates in amino-acid biosynthesis; L-tryptophan biosynthesis; L-tryptophan from chorismate: step 3/5. The protein is N-(5'-phosphoribosyl)anthranilate isomerase of Caldanaerobacter subterraneus subsp. tengcongensis (strain DSM 15242 / JCM 11007 / NBRC 100824 / MB4) (Thermoanaerobacter tengcongensis).